The following is a 205-amino-acid chain: High frequency lysogenization protein HflD homolog (205 aa).

The protein belongs to the HflD family.

It is found in the cytoplasm. The protein resides in the cell inner membrane. This chain is High frequency lysogenization protein HflD homolog, found in Vibrio atlanticus (strain LGP32) (Vibrio splendidus (strain Mel32)).